The primary structure comprises 498 residues: Glycerol kinase (498 aa).

Residue threonine 12 participates in ADP binding. Residues threonine 12, threonine 13, and serine 14 each coordinate ATP. Sn-glycerol 3-phosphate is bound at residue threonine 12. ADP is bound at residue arginine 16. Arginine 82, glutamate 83, tyrosine 134, and aspartate 244 together coordinate sn-glycerol 3-phosphate. Arginine 82, glutamate 83, tyrosine 134, aspartate 244, and glutamine 245 together coordinate glycerol. The ADP site is built by threonine 266 and glycine 310. ATP is bound by residues threonine 266, glycine 310, glutamine 314, and glycine 411. 2 residues coordinate ADP: glycine 411 and asparagine 415.

The protein belongs to the FGGY kinase family.

It carries out the reaction glycerol + ATP = sn-glycerol 3-phosphate + ADP + H(+). The protein operates within polyol metabolism; glycerol degradation via glycerol kinase pathway; sn-glycerol 3-phosphate from glycerol: step 1/1. With respect to regulation, inhibited by fructose 1,6-bisphosphate (FBP). Key enzyme in the regulation of glycerol uptake and metabolism. Catalyzes the phosphorylation of glycerol to yield sn-glycerol 3-phosphate. The chain is Glycerol kinase from Roseiflexus sp. (strain RS-1).